Consider the following 1407-residue polypeptide: DNA-directed RNA polymerase subunit beta' (1407 aa).

Residues Cys70, Cys72, Cys85, and Cys88 each contribute to the Zn(2+) site. Residues Asp460, Asp462, and Asp464 each contribute to the Mg(2+) site. Residues Cys814, Cys888, Cys895, and Cys898 each coordinate Zn(2+). At Lys972 the chain carries N6-acetyllysine.

This sequence belongs to the RNA polymerase beta' chain family. The RNAP catalytic core consists of 2 alpha, 1 beta, 1 beta' and 1 omega subunit. When a sigma factor is associated with the core the holoenzyme is formed, which can initiate transcription. Mg(2+) is required as a cofactor. It depends on Zn(2+) as a cofactor.

It carries out the reaction RNA(n) + a ribonucleoside 5'-triphosphate = RNA(n+1) + diphosphate. DNA-dependent RNA polymerase catalyzes the transcription of DNA into RNA using the four ribonucleoside triphosphates as substrates. This Escherichia coli O1:K1 / APEC protein is DNA-directed RNA polymerase subunit beta'.